An 88-amino-acid chain; its full sequence is MSEATYQRKGRTLVGIVVSDKNDKTIVVRVETLVKHPLLKKYVRRRKKFTAHDPMNECGIGDKVKIIEFRPLSRNKRWHLESILEKAV.

It belongs to the universal ribosomal protein uS17 family. As to quaternary structure, part of the 30S ribosomal subunit.

Its function is as follows. One of the primary rRNA binding proteins, it binds specifically to the 5'-end of 16S ribosomal RNA. This is Small ribosomal subunit protein uS17 from Nitratidesulfovibrio vulgaris (strain ATCC 29579 / DSM 644 / CCUG 34227 / NCIMB 8303 / VKM B-1760 / Hildenborough) (Desulfovibrio vulgaris).